Consider the following 338-residue polypeptide: MKTKEVTPRGDSGEKLARDLLRLVPPQTHKLGTFRASELGRDLRAIVANYAPKTISGHIQIFRDDFIAPPYRQPLYGEFLVHAKTFHPQEPRGTFVFAFSVGDGPECTSVDTIFSPVSLFRVCGLGADAAPHTHRISHIWYESESDFLNVAANVRELIENCSLHKFLSPVGPLVQNIQSTFLNKITTVVKGEVLSNRSPPENIKLVLPSDLFFDMDETCPYPPSGDPVKPRVCYYVCILYVMVNNIPSASLQFFRTGKGASDVVFFLRRYYSDAIANKITVLGDNLDINNLTLGAVCMLGYSSSQSTPGRGNLHFRSYSLPTVEVSDFVAQPGSWTLI.

Belongs to the herpesviridae TRX1 protein family. In terms of assembly, interacts with TRX2, MCP and capsid vertex component 2/CVC2.

It localises to the virion. It is found in the host nucleus. Functionally, structural component of the T=16 icosahedral capsid. The capsid is composed of pentamers and hexamers of major capsid protein/MCP, which are linked together by heterotrimers called triplexes. These triplexes are formed by a single molecule of triplex protein 1/TRX1 and two copies of triplex protein 2/TRX2. Additionally, TRX1 is required for efficient transport of TRX2 to the nucleus, which is the site of capsid assembly. This is Triplex capsid protein 1 from Equine herpesvirus 2 (strain 86/87) (EHV-2).